Here is a 513-residue protein sequence, read N- to C-terminus: Protein disulfide-isomerase 2 (513 aa).

The N-terminal stretch at 1-20 (MNKFLALLFVLALFANIAFS) is a signal peptide. Thioredoxin domains lie at 21–147 (CEGH…EELK) and 355–486 (DVIG…DNAA). Residues Cys70, Cys73, Cys406, and Cys409 each act as nucleophile in the active site. 2 cysteine pairs are disulfide-bonded: Cys70–Cys73 and Cys406–Cys409. Residues 491-513 (LPSSQTDDNVESKKDSSAKHDEL) are disordered. Positions 500–513 (VESKKDSSAKHDEL) are enriched in basic and acidic residues. The Prevents secretion from ER motif lies at 510 to 513 (HDEL).

It belongs to the protein disulfide isomerase family.

It is found in the endoplasmic reticulum lumen. It carries out the reaction Catalyzes the rearrangement of -S-S- bonds in proteins.. In terms of biological role, participates in the folding of proteins containing disulfide bonds, may be involved in glycosylation, prolyl hydroxylation and triglyceride transfer. This chain is Protein disulfide-isomerase 2 (pdi2), found in Dictyostelium discoideum (Social amoeba).